We begin with the raw amino-acid sequence, 323 residues long: Peroxisomal and mitochondrial division factor 2 (323 aa).

3 disordered regions span residues 1–55, 73–92, and 120–143; these read MAEE…NDAI, ESKA…KSDE, and TART…SQKG. Residues 1–297 are Cytoplasmic-facing; sequence MAEERSLNGE…WSPNVTAVGS (297 aa). A compositionally biased stretch (acidic residues) spans 13–26; it reads GQDDESFFDSDQQG. The stretch at 28–278 forms a coiled coil; sequence DGKSTELNQK…INGLKNVVEE (251 aa). A helical transmembrane segment spans residues 298 to 318; it reads GGAVAAVAVAVAGAAVVCYIY. The Mitochondrial intermembrane segment spans residues 319–323; sequence HSRRV.

As to quaternary structure, homodimer. Interacts with PMD1.

The protein resides in the mitochondrion outer membrane. Involved in morphogenesis and proliferation of mitochondria. Does not act redundantly with PMD1. Is not involved in peroxisomal proliferation. The polypeptide is Peroxisomal and mitochondrial division factor 2 (Arabidopsis thaliana (Mouse-ear cress)).